A 683-amino-acid chain; its full sequence is UvrABC system protein B (683 aa).

A Helicase ATP-binding domain is found at 31 to 414; it reads AGFEKGYKEQ…ELERTDHKVE (384 aa). 44–51 is a binding site for ATP; it reads GATGTGKT. Positions 97–120 match the Beta-hairpin motif; that stretch reads YYDYYQPEAYVPQSDTYIEKDSAI. In terms of domain architecture, Helicase C-terminal spans 435–601; it reads QIDDLVGEIN…TIIKPVHDVI (167 aa). The UVR domain occupies 632–667; the sequence is KTMIKNLQEQMKEAAKKLDFEEAANLRDAIMELQSS. The disordered stretch occupies residues 662–683; that stretch reads MELQSSSRRPKTRKGKALNGKR. Basic residues predominate over residues 669–683; it reads RRPKTRKGKALNGKR.

Belongs to the UvrB family. As to quaternary structure, forms a heterotetramer with UvrA during the search for lesions. Interacts with UvrC in an incision complex.

It localises to the cytoplasm. Functionally, the UvrABC repair system catalyzes the recognition and processing of DNA lesions. A damage recognition complex composed of 2 UvrA and 2 UvrB subunits scans DNA for abnormalities. Upon binding of the UvrA(2)B(2) complex to a putative damaged site, the DNA wraps around one UvrB monomer. DNA wrap is dependent on ATP binding by UvrB and probably causes local melting of the DNA helix, facilitating insertion of UvrB beta-hairpin between the DNA strands. Then UvrB probes one DNA strand for the presence of a lesion. If a lesion is found the UvrA subunits dissociate and the UvrB-DNA preincision complex is formed. This complex is subsequently bound by UvrC and the second UvrB is released. If no lesion is found, the DNA wraps around the other UvrB subunit that will check the other stand for damage. This Lactobacillus acidophilus (strain ATCC 700396 / NCK56 / N2 / NCFM) protein is UvrABC system protein B.